A 419-amino-acid chain; its full sequence is eIF5-mimic protein 1 (419 aa).

A disordered region spans residues Met-1–Lys-22. Residue Lys-117 is modified to N6-acetyllysine. A W2 domain is found at Val-248–Glu-415. 3 positions are modified to phosphoserine: Ser-412, Ser-414, and Ser-419.

It belongs to the BZW family. As to quaternary structure, interacts with EIF3E, EIF2S2 and EIF3C.

It is found in the cytoplasm. In terms of biological role, translation initiation regulator which represses non-AUG initiated translation and repeat-associated non-AUG (RAN) initiated translation by acting as a competitive inhibitor of eukaryotic translation initiation factor 5 (EIF5) function. Increases the accuracy of translation initiation by impeding EIF5-dependent translation from non-AUG codons by competing with it for interaction with EIF2S2 within the 43S pre-initiation complex (PIC) in an EIF3C-binding dependent manner. The protein is eIF5-mimic protein 1 (Bzw2) of Mus musculus (Mouse).